We begin with the raw amino-acid sequence, 261 residues long: Hydroxyethylthiazole kinase (261 aa).

Met38 contributes to the substrate binding site. Residues Arg114 and Thr159 each contribute to the ATP site. Gly186 contacts substrate.

Belongs to the Thz kinase family. The cofactor is Mg(2+).

The catalysed reaction is 5-(2-hydroxyethyl)-4-methylthiazole + ATP = 4-methyl-5-(2-phosphooxyethyl)-thiazole + ADP + H(+). It participates in cofactor biosynthesis; thiamine diphosphate biosynthesis; 4-methyl-5-(2-phosphoethyl)-thiazole from 5-(2-hydroxyethyl)-4-methylthiazole: step 1/1. Catalyzes the phosphorylation of the hydroxyl group of 4-methyl-5-beta-hydroxyethylthiazole (THZ). This is Hydroxyethylthiazole kinase from Halalkalibacterium halodurans (strain ATCC BAA-125 / DSM 18197 / FERM 7344 / JCM 9153 / C-125) (Bacillus halodurans).